The sequence spans 349 residues: DNA-directed RNA polymerase subunit Rpo1N (349 aa).

A disordered region spans residues 306-349 (EDEGEEFAGEQATNLSESADDRMDRDRPSSHGAAPIDVPEVGDD). The span at 324–334 (ADDRMDRDRPS) shows a compositional bias: basic and acidic residues.

The protein belongs to the RNA polymerase beta' chain family. In terms of assembly, part of the RNA polymerase complex.

The protein resides in the cytoplasm. It catalyses the reaction RNA(n) + a ribonucleoside 5'-triphosphate = RNA(n+1) + diphosphate. Its function is as follows. DNA-dependent RNA polymerase (RNAP) catalyzes the transcription of DNA into RNA using the four ribonucleoside triphosphates as substrates. Forms the clamp head domain. The chain is DNA-directed RNA polymerase subunit Rpo1N from Halococcus morrhuae (Micrococcus morrhuae).